The chain runs to 334 residues: Testis-specific Y-encoded protein 1 (334 aa).

Phosphoserine is present on serine 4. 2 disordered regions span residues 27 to 46 (LEGE…PAGD) and 96 to 146 (NEGE…AERR). Basic and acidic residues-rich tracts occupy residues 96-108 (NEGE…KQEG) and 115-128 (ELEK…DSKD).

It belongs to the nucleosome assembly protein (NAP) family. In terms of processing, phosphorylated. As to expression, testis.

It localises to the cytoplasm. Its subcellular location is the nucleus. May be involved in sperm differentiation and proliferation. The sequence is that of Testis-specific Y-encoded protein 1 (Tspy1) from Rattus norvegicus (Rat).